Reading from the N-terminus, the 70-residue chain is ATP synthase subunit c (70 aa).

2 consecutive transmembrane segments (helical) span residues 5 to 25 (AAGI…AIIV) and 47 to 67 (FIGV…SFIL).

This sequence belongs to the ATPase C chain family. F-type ATPases have 2 components, F(1) - the catalytic core - and F(0) - the membrane proton channel. F(1) has five subunits: alpha(3), beta(3), gamma(1), delta(1), epsilon(1). F(0) has three main subunits: a(1), b(2) and c(10-14). The alpha and beta chains form an alternating ring which encloses part of the gamma chain. F(1) is attached to F(0) by a central stalk formed by the gamma and epsilon chains, while a peripheral stalk is formed by the delta and b chains.

It is found in the cell membrane. Functionally, f(1)F(0) ATP synthase produces ATP from ADP in the presence of a proton or sodium gradient. F-type ATPases consist of two structural domains, F(1) containing the extramembraneous catalytic core and F(0) containing the membrane proton channel, linked together by a central stalk and a peripheral stalk. During catalysis, ATP synthesis in the catalytic domain of F(1) is coupled via a rotary mechanism of the central stalk subunits to proton translocation. Its function is as follows. Key component of the F(0) channel; it plays a direct role in translocation across the membrane. A homomeric c-ring of between 10-14 subunits forms the central stalk rotor element with the F(1) delta and epsilon subunits. The sequence is that of ATP synthase subunit c from Halalkalibacterium halodurans (strain ATCC BAA-125 / DSM 18197 / FERM 7344 / JCM 9153 / C-125) (Bacillus halodurans).